The sequence spans 299 residues: Homoserine O-acetyltransferase (299 aa).

Catalysis depends on Cys-142, which acts as the Acyl-thioester intermediate. Lys-163 and Ser-192 together coordinate substrate. The Proton acceptor role is filled by His-235. The active site involves Glu-237. Position 249 (Arg-249) interacts with substrate.

This sequence belongs to the MetA family.

Its subcellular location is the cytoplasm. The enzyme catalyses L-homoserine + acetyl-CoA = O-acetyl-L-homoserine + CoA. It functions in the pathway amino-acid biosynthesis; L-methionine biosynthesis via de novo pathway; O-acetyl-L-homoserine from L-homoserine: step 1/1. In terms of biological role, transfers an acetyl group from acetyl-CoA to L-homoserine, forming acetyl-L-homoserine. This Synechococcus sp. (strain ATCC 27144 / PCC 6301 / SAUG 1402/1) (Anacystis nidulans) protein is Homoserine O-acetyltransferase.